The following is a 92-amino-acid chain: Small ribosomal subunit protein bS20 (92 aa).

Positions 1–28 (MANTASAEKRNRQAQKRRARNVQVRTGV) are disordered.

This sequence belongs to the bacterial ribosomal protein bS20 family.

In terms of biological role, binds directly to 16S ribosomal RNA. This Anaeromyxobacter dehalogenans (strain 2CP-C) protein is Small ribosomal subunit protein bS20.